Here is a 750-residue protein sequence, read N- to C-terminus: Photosystem I P700 chlorophyll a apoprotein A1 (750 aa).

8 consecutive transmembrane segments (helical) span residues 70 to 93 (VFSA…FHGA), 156 to 179 (LYCT…FHYH), 195 to 219 (LNHH…HVSL), 291 to 309 (IAHH…GHMY), 346 to 369 (WHAQ…HHMY), 385 to 411 (LSLF…IFMV), 433 to 455 (AIIS…LYIH), and 531 to 549 (FLVH…LILL). [4Fe-4S] cluster is bound by residues Cys-573 and Cys-582. The next 2 helical transmembrane spans lie at 589–610 (HVFL…HFSW) and 664–686 (LSAY…MFLF). His-675 is a chlorophyll a' binding site. Chlorophyll a contacts are provided by Met-683 and Tyr-691. Trp-692 contacts phylloquinone. Residues 724–744 (AVGVTHYLLGGIATTWAFFLA) traverse the membrane as a helical segment.

Belongs to the PsaA/PsaB family. The PsaA/B heterodimer binds the P700 chlorophyll special pair and subsequent electron acceptors. PSI consists of a core antenna complex that captures photons, and an electron transfer chain that converts photonic excitation into a charge separation. The eukaryotic PSI reaction center is composed of at least 11 subunits. It depends on P700 is a chlorophyll a/chlorophyll a' dimer, A0 is one or more chlorophyll a, A1 is one or both phylloquinones and FX is a shared 4Fe-4S iron-sulfur center. as a cofactor.

It is found in the plastid. The protein localises to the chloroplast thylakoid membrane. It catalyses the reaction reduced [plastocyanin] + hnu + oxidized [2Fe-2S]-[ferredoxin] = oxidized [plastocyanin] + reduced [2Fe-2S]-[ferredoxin]. Its function is as follows. PsaA and PsaB bind P700, the primary electron donor of photosystem I (PSI), as well as the electron acceptors A0, A1 and FX. PSI is a plastocyanin-ferredoxin oxidoreductase, converting photonic excitation into a charge separation, which transfers an electron from the donor P700 chlorophyll pair to the spectroscopically characterized acceptors A0, A1, FX, FA and FB in turn. Oxidized P700 is reduced on the lumenal side of the thylakoid membrane by plastocyanin. This Panax ginseng (Korean ginseng) protein is Photosystem I P700 chlorophyll a apoprotein A1.